A 485-amino-acid polypeptide reads, in one-letter code: NADH-quinone oxidoreductase subunit N (485 aa).

Helical transmembrane passes span 8–28 (LIAL…MLSI), 35–55 (FLNA…LWFV), 75–95 (LYTG…YPWL), 105–125 (FYLL…ANHL), 127–147 (SLFL…GYAF), 159–179 (YTIL…LVYA), 203–223 (LLAG…LVPF), 235–255 (PAPV…GVVM), 271–291 (VVLG…ALTQ), 297–317 (LLGY…IALK), 326–346 (VGVY…VVSL), 374–394 (AVMT…GFIG), 408–427 (WWLT…YYLR), and 455–475 (VVVL…QPLI).

The protein belongs to the complex I subunit 2 family. In terms of assembly, NDH-1 is composed of 13 different subunits. Subunits NuoA, H, J, K, L, M, N constitute the membrane sector of the complex.

It is found in the cell inner membrane. It catalyses the reaction a quinone + NADH + 5 H(+)(in) = a quinol + NAD(+) + 4 H(+)(out). Functionally, NDH-1 shuttles electrons from NADH, via FMN and iron-sulfur (Fe-S) centers, to quinones in the respiratory chain. The immediate electron acceptor for the enzyme in this species is believed to be ubiquinone. Couples the redox reaction to proton translocation (for every two electrons transferred, four hydrogen ions are translocated across the cytoplasmic membrane), and thus conserves the redox energy in a proton gradient. The sequence is that of NADH-quinone oxidoreductase subunit N from Cronobacter sakazakii (strain ATCC BAA-894) (Enterobacter sakazakii).